Reading from the N-terminus, the 647-residue chain is DNA mismatch repair protein MutL (647 aa).

Belongs to the DNA mismatch repair MutL/HexB family.

In terms of biological role, this protein is involved in the repair of mismatches in DNA. It is required for dam-dependent methyl-directed DNA mismatch repair. May act as a 'molecular matchmaker', a protein that promotes the formation of a stable complex between two or more DNA-binding proteins in an ATP-dependent manner without itself being part of a final effector complex. In Bacillus cereus (strain G9842), this protein is DNA mismatch repair protein MutL.